The primary structure comprises 455 residues: Phosphoglucosamine mutase (455 aa).

Serine 103 acts as the Phosphoserine intermediate in catalysis. 4 residues coordinate Mg(2+): serine 103, aspartate 243, aspartate 245, and aspartate 247. Serine 103 carries the post-translational modification Phosphoserine.

It belongs to the phosphohexose mutase family. The cofactor is Mg(2+). In terms of processing, activated by phosphorylation.

The enzyme catalyses alpha-D-glucosamine 1-phosphate = D-glucosamine 6-phosphate. Catalyzes the conversion of glucosamine-6-phosphate to glucosamine-1-phosphate. In Halorhodospira halophila (strain DSM 244 / SL1) (Ectothiorhodospira halophila (strain DSM 244 / SL1)), this protein is Phosphoglucosamine mutase.